The chain runs to 30 residues: Photosystem I reaction center subunit XII (30 aa).

A helical transmembrane segment spans residues 6–26 (VFTILAIALVPAVMALLLGSA).

Belongs to the PsaM family.

It is found in the cellular thylakoid membrane. The chain is Photosystem I reaction center subunit XII from Synechococcus sp. (strain JA-2-3B'a(2-13)) (Cyanobacteria bacterium Yellowstone B-Prime).